The sequence spans 232 residues: Protein DOG1-like 4 (232 aa).

The 221-residue stretch at 9 to 229 (EEKFLEFYES…RRWGNRRHYV (221 aa)) folds into the DOG1 domain.

The polypeptide is Protein DOG1-like 4 (Arabidopsis thaliana (Mouse-ear cress)).